The following is a 270-amino-acid chain: MFVSPMLLHSIKEPFNDENYITELKFDGIRLILSKFDNQIKLYTRHNNEVTSKFPELMDLDIPDGTVLDGEVIVAASGGAPDFEAVMERFMSKKSAHNIVYCVFDVIYKDGQSIAAKPLTERKTVLNSLELDHPNVFVIEGTQGNGLAYFNLAKEKNLEGIVIKKANSPYEINKRSHNWLKVINYDYTEVLITGYTKKDIKFLLSYPDGTSAGFMEFMPHAERTKFHSMKQVKSESDEYVFIEPILCNVKHRFKTKHGKLRIPSFESWRV.

Lys25 functions as the N6-AMP-lysine intermediate in the catalytic mechanism.

Belongs to the ATP-dependent DNA ligase family.

In Bacillus subtilis (strain 168), this protein is SPbeta prophage-derived DNA ligase-like protein LigB (ligB).